A 203-amino-acid polypeptide reads, in one-letter code: RNA annealing protein YRA2 (203 aa).

Residue methionine 1 is modified to N-acetylmethionine. 2 disordered regions span residues 1-60 (MDKA…REEP) and 137-203 (QPQR…YMKG). Residues 11 to 20 (NSHTDSSSNH) are compositionally biased toward polar residues. The segment covering 47-60 (SRSKDRLYREREEP) has biased composition (basic and acidic residues). In terms of domain architecture, RRM spans 64–138 (KRIRISKIPL…AKIEVEIYQP (75 aa)). The span at 139–153 (QRKHSRMNAHNRRKQ) shows a compositional bias: basic residues. Positions 154 to 164 (TAQEHGRDRPG) are enriched in basic and acidic residues. Positions 165-180 (SHYRQKPNRVSKKNKG) are enriched in basic residues.

Belongs to the YRA1 family. In terms of assembly, associates with mRNPs. Interacts with YRA1.

The protein localises to the nucleus. In terms of biological role, involved in export of poly(A) mRNAs from the nucleus. Recruited to the coding sequences as well as poly-A sites of active genes. The polypeptide is RNA annealing protein YRA2 (YRA2) (Saccharomyces cerevisiae (strain YJM789) (Baker's yeast)).